The chain runs to 266 residues: Small ribosomal subunit protein uS3m (266 aa).

This sequence belongs to the universal ribosomal protein uS3 family.

It localises to the mitochondrion. In Mycosarcoma maydis (Corn smut fungus), this protein is Small ribosomal subunit protein uS3m (MRPS3).